Here is a 73-residue protein sequence, read N- to C-terminus: MNPAAFLISLPIRFYRLVISPMIASNCRYTPTCSSYAMEALRKHGAIKGTWLAARRVSRCHPWGGSGIDNVPD.

It belongs to the UPF0161 family.

It localises to the cell inner membrane. Its function is as follows. Could be involved in insertion of integral membrane proteins into the membrane. The sequence is that of Putative membrane protein insertion efficiency factor from Jannaschia sp. (strain CCS1).